A 447-amino-acid polypeptide reads, in one-letter code: Exodeoxyribonuclease 7 large subunit (447 aa).

It belongs to the XseA family. As to quaternary structure, heterooligomer composed of large and small subunits.

Its subcellular location is the cytoplasm. It catalyses the reaction Exonucleolytic cleavage in either 5'- to 3'- or 3'- to 5'-direction to yield nucleoside 5'-phosphates.. In terms of biological role, bidirectionally degrades single-stranded DNA into large acid-insoluble oligonucleotides, which are then degraded further into small acid-soluble oligonucleotides. The chain is Exodeoxyribonuclease 7 large subunit from Streptococcus mutans serotype c (strain ATCC 700610 / UA159).